We begin with the raw amino-acid sequence, 479 residues long: Ribulose bisphosphate carboxylase large chain (479 aa).

Positions 1-2 (MS) are excised as a propeptide. Residue proline 3 is modified to N-acetylproline. Lysine 14 carries the N6,N6,N6-trimethyllysine modification. Residues asparagine 123 and threonine 173 each contribute to the substrate site. The active-site Proton acceptor is the lysine 175. Position 177 (lysine 177) interacts with substrate. 3 residues coordinate Mg(2+): lysine 201, aspartate 203, and glutamate 204. An N6-carboxylysine modification is found at lysine 201. Histidine 294 functions as the Proton acceptor in the catalytic mechanism. Substrate contacts are provided by arginine 295, histidine 327, and serine 379.

It belongs to the RuBisCO large chain family. Type I subfamily. In terms of assembly, heterohexadecamer of 8 large chains and 8 small chains. Mg(2+) serves as cofactor.

It localises to the plastid. It is found in the chloroplast. It catalyses the reaction 2 (2R)-3-phosphoglycerate + 2 H(+) = D-ribulose 1,5-bisphosphate + CO2 + H2O. The catalysed reaction is D-ribulose 1,5-bisphosphate + O2 = 2-phosphoglycolate + (2R)-3-phosphoglycerate + 2 H(+). Its function is as follows. RuBisCO catalyzes two reactions: the carboxylation of D-ribulose 1,5-bisphosphate, the primary event in carbon dioxide fixation, as well as the oxidative fragmentation of the pentose substrate in the photorespiration process. Both reactions occur simultaneously and in competition at the same active site. In Jasminum nudiflorum (Winter jasmine), this protein is Ribulose bisphosphate carboxylase large chain.